The chain runs to 911 residues: Alpha-actinin-4 (911 aa).

An actin-binding region spans residues 1 to 269 (MVDYHAANQA…YVSSFYHAFS (269 aa)). Positions 12-26 (QYGPSSGGNGTGGGG) are interaction with VCL. The tract at residues 12–31 (QYGPSSGGNGTGGGGGMGDY) is disordered. The segment covering 16 to 29 (SSGGNGTGGGGGMG) has biased composition (gly residues). Tyr31 is modified (phosphotyrosine). Positions 40–61 (RDLLLDPAWEKQQRKTFTAWCN) are interaction with VCL. Calponin-homology (CH) domains are found at residues 50-154 (KQQR…LRFA) and 163-269 (TSAK…HAFS). The LXXLL motif motif lies at 84-88 (LMLLL). Positions 108-126 (KINNVNKALDFIASKGVKL) are interaction with VCL. Lys114 is modified (N6-acetyllysine). The tract at residues 177 to 192 (TAPYKNVNVQNFHISW) is polyphosphoinositide (PIP2)-binding. Lys214 is subject to N6-acetyllysine. A Phosphothreonine modification is found at Thr249. Spectrin repeat units lie at residues 293–403 (HLME…WLLN), 413–518 (HLAE…ALEK), 528–639 (QLHL…ALLE), and 649–752 (HLRR…EVEN). Residues Lys592 and Lys625 each carry the N6-acetyllysine modification. A Phosphoserine modification is found at Ser696. The mediates interaction with MICALL2 stretch occupies residues 736 to 911 (WEQLLTTIAR…STALYGESDL (176 aa)). EF-hand domains lie at 765–800 (EQMQ…LGYD) and 806–841 (QGDA…ETTD). A Ca(2+)-binding site is contributed by Asp778. Residue Lys779 is modified to N6-acetyllysine. The Ca(2+) site is built by Asp780 and Glu789. Residue Lys859 is modified to N6-acetyllysine. A Phosphoserine modification is found at Ser909.

Belongs to the alpha-actinin family. As to quaternary structure, homodimer; antiparallel. Interacts with MAGI1. Interacts with MICALL2 (preferentially in opened conformation); stimulated by RAB13 activation. Identified in a IGF2BP1-dependent mRNP granule complex containing untranslated mRNAs. Component of the CART complex, at least composed of ACTN4, HGS/HRS, MYO5B and TRIM3. Binds TRIM3 at the N-terminus. Interacts with PDLIM2. Identified in a complex with CASK, IQGAP1, MAGI2, NPHS1, SPTAN1 and SPTBN1. Interacts with PPARG and RARA. Binds to VCL; this interaction triggers VCL conformational changes. Interacts with SEPTIN14. Interacts with IGSF8. Expressed in the foot process layer of podocytes in the kidney glomerulus but not in tubules (at protein level).

The protein resides in the nucleus. It localises to the cytoplasm. Its subcellular location is the cell junction. It is found in the cytoskeleton. The protein localises to the stress fiber. The protein resides in the perinuclear region. In terms of biological role, F-actin cross-linking protein which is thought to anchor actin to a variety of intracellular structures. This is a bundling protein. Probably involved in vesicular trafficking via its association with the CART complex. The CART complex is necessary for efficient transferrin receptor recycling but not for EGFR degradation. Involved in tight junction assembly in epithelial cells probably through interaction with MICALL2. Links MICALL2 to the actin cytoskeleton and recruits it to the tight junctions. May also function as a transcriptional coactivator, stimulating transcription mediated by the nuclear hormone receptors PPARG and RARA. Association with IGSF8 regulates the immune synapse formation and is required for efficient T-cell activation. This Rattus norvegicus (Rat) protein is Alpha-actinin-4.